Reading from the N-terminus, the 214-residue chain is Acyl-homoserine-lactone synthase (214 aa).

Belongs to the autoinducer synthase family.

It carries out the reaction a fatty acyl-[ACP] + S-adenosyl-L-methionine = an N-acyl-L-homoserine lactone + S-methyl-5'-thioadenosine + holo-[ACP] + H(+). In terms of biological role, required for the synthesis of autoinducer molecules such as OHHL (N-(3-oxohexanoyl)-L-homoserine lactone), and HHL (N-hexanoyl-L-homoserine lactone). The sequence is that of Acyl-homoserine-lactone synthase (yenI) from Yersinia enterocolitica.